A 764-amino-acid polypeptide reads, in one-letter code: Calpain-like protease palB/RIM13 (764 aa).

Positions 95–368 constitute a Calpain catalytic domain; the sequence is GEFYPPLTVY…FKYFYINWNP (274 aa). Catalysis depends on residues C165, H318, and N336.

This sequence belongs to the peptidase C2 family. PalB/RIM13 subfamily.

Required for the proteolytic cleavage of the transcription factor RIM101 in response to alkaline ambient pH. The polypeptide is Calpain-like protease palB/RIM13 (Debaryomyces hansenii (strain ATCC 36239 / CBS 767 / BCRC 21394 / JCM 1990 / NBRC 0083 / IGC 2968) (Yeast)).